The following is a 347-amino-acid chain: Protein RecA (347 aa).

G64–T71 contacts ATP.

This sequence belongs to the RecA family.

The protein resides in the cytoplasm. Can catalyze the hydrolysis of ATP in the presence of single-stranded DNA, the ATP-dependent uptake of single-stranded DNA by duplex DNA, and the ATP-dependent hybridization of homologous single-stranded DNAs. It interacts with LexA causing its activation and leading to its autocatalytic cleavage. The polypeptide is Protein RecA (Bartonella henselae (strain ATCC 49882 / DSM 28221 / CCUG 30454 / Houston 1) (Rochalimaea henselae)).